An 87-amino-acid polypeptide reads, in one-letter code: Small ribosomal subunit protein uS15 (87 aa).

It belongs to the universal ribosomal protein uS15 family. Part of the 30S ribosomal subunit. Forms a bridge to the 50S subunit in the 70S ribosome, contacting the 23S rRNA.

In terms of biological role, one of the primary rRNA binding proteins, it binds directly to 16S rRNA where it helps nucleate assembly of the platform of the 30S subunit by binding and bridging several RNA helices of the 16S rRNA. Its function is as follows. Forms an intersubunit bridge (bridge B4) with the 23S rRNA of the 50S subunit in the ribosome. This is Small ribosomal subunit protein uS15 from Clostridium botulinum (strain Eklund 17B / Type B).